A 239-amino-acid chain; its full sequence is Phosphothreonine lyase OspF (239 aa).

Residue His104 is the Proton donor of the active site. Residue Lys134 is the Proton acceptor of the active site.

Belongs to the phosphothreonine lyase family.

The protein resides in the secreted. In terms of biological role, catalyzes the removal of the phosphate group from the phosphothreonine in the mitogen-activated protein kinases such as MAPK2/ERK2, MAPK3/ERK1, MAPK8 and MAPK14 in an irreversible reaction, thus preventing the downstream phosphorylation of histone H3. This epigenetic modification results in inhibition of the transcription of a specific subset of pro-inflammatory genes, and ultimately to a reduced immune response against the invading pathogen. The diminished immune response enhances the bacterium's ability to disseminate and multiply within the host. The polypeptide is Phosphothreonine lyase OspF (ospF) (Shigella sonnei (strain Ss046)).